Here is a 323-residue protein sequence, read N- to C-terminus: tRNA U34 carboxymethyltransferase (323 aa).

Carboxy-S-adenosyl-L-methionine contacts are provided by residues Lys90, Trp104, Lys109, Gly129, 182–183, Met197, Tyr201, and Arg316; that span reads IE.

The protein belongs to the class I-like SAM-binding methyltransferase superfamily. CmoB family. As to quaternary structure, homotetramer.

It catalyses the reaction carboxy-S-adenosyl-L-methionine + 5-hydroxyuridine(34) in tRNA = 5-carboxymethoxyuridine(34) in tRNA + S-adenosyl-L-homocysteine + H(+). In terms of biological role, catalyzes carboxymethyl transfer from carboxy-S-adenosyl-L-methionine (Cx-SAM) to 5-hydroxyuridine (ho5U) to form 5-carboxymethoxyuridine (cmo5U) at position 34 in tRNAs. The protein is tRNA U34 carboxymethyltransferase of Idiomarina loihiensis (strain ATCC BAA-735 / DSM 15497 / L2-TR).